Here is a 322-residue protein sequence, read N- to C-terminus: UDP-N-acetylenolpyruvoylglucosamine reductase (322 aa).

The 167-residue stretch at 36-202 folds into the FAD-binding PCMH-type domain; sequence RAGGPAQVLF…TSVLFEGVPG (167 aa). Arg-182 is a catalytic residue. Ser-231 acts as the Proton donor in catalysis. Glu-301 is a catalytic residue.

This sequence belongs to the MurB family. It depends on FAD as a cofactor.

The protein resides in the cytoplasm. The catalysed reaction is UDP-N-acetyl-alpha-D-muramate + NADP(+) = UDP-N-acetyl-3-O-(1-carboxyvinyl)-alpha-D-glucosamine + NADPH + H(+). Its pathway is cell wall biogenesis; peptidoglycan biosynthesis. In terms of biological role, cell wall formation. In Brucella abortus (strain S19), this protein is UDP-N-acetylenolpyruvoylglucosamine reductase.